The chain runs to 31 residues: Photosystem II reaction center protein T (31 aa).

The helical transmembrane segment at serine 3–phenylalanine 23 threads the bilayer.

Belongs to the PsbT family. As to quaternary structure, PSII is composed of 1 copy each of membrane proteins PsbA, PsbB, PsbC, PsbD, PsbE, PsbF, PsbH, PsbI, PsbJ, PsbK, PsbL, PsbM, PsbT, PsbX, PsbY, PsbZ, Psb30/Ycf12, peripheral proteins PsbO, CyanoQ (PsbQ), PsbU, PsbV and a large number of cofactors. It forms dimeric complexes.

The protein localises to the cellular thylakoid membrane. Its function is as follows. Found at the monomer-monomer interface of the photosystem II (PS II) dimer, plays a role in assembly and dimerization of PSII. PSII is a light-driven water plastoquinone oxidoreductase, using light energy to abstract electrons from H(2)O, generating a proton gradient subsequently used for ATP formation. This chain is Photosystem II reaction center protein T, found in Rippkaea orientalis (strain PCC 8801 / RF-1) (Cyanothece sp. (strain PCC 8801)).